Here is a 416-residue protein sequence, read N- to C-terminus: Adenylosuccinate synthetase (416 aa).

Residues 13 to 19 (GDEGKGK) and 41 to 43 (GHT) contribute to the GTP site. Aspartate 14 acts as the Proton acceptor in catalysis. Mg(2+)-binding residues include aspartate 14 and glycine 41. Residues 14 to 17 (DEGK), 39 to 42 (NAGH), threonine 126, arginine 140, glutamine 220, threonine 235, and arginine 299 each bind IMP. Residue histidine 42 is the Proton donor of the active site. 295 to 301 (TTTGRRR) contributes to the substrate binding site. GTP-binding positions include arginine 301, 327–329 (KLD), and 405–407 (STS).

Belongs to the adenylosuccinate synthetase family. As to quaternary structure, homodimer. It depends on Mg(2+) as a cofactor.

The protein localises to the cytoplasm. The catalysed reaction is IMP + L-aspartate + GTP = N(6)-(1,2-dicarboxyethyl)-AMP + GDP + phosphate + 2 H(+). Its pathway is purine metabolism; AMP biosynthesis via de novo pathway; AMP from IMP: step 1/2. Its function is as follows. Plays an important role in the de novo pathway of purine nucleotide biosynthesis. Catalyzes the first committed step in the biosynthesis of AMP from IMP. The protein is Adenylosuccinate synthetase of Campylobacter curvus (strain 525.92).